Reading from the N-terminus, the 387-residue chain is uncharacterized protein (387 aa).

To M.jannaschii MJ0043 N-terminal region.

This is an uncharacterized protein from Bacillus subtilis (strain 168).